A 494-amino-acid chain; its full sequence is Alpha-amylase 2 (494 aa).

Positions 1–18 (MFLAKSIVCLALLAVANA) are cleaved as a signal peptide. Cys-46 and Cys-102 are oxidised to a cystine. Residues Asn-116, Arg-165, and Asp-174 each coordinate Ca(2+). Cys-153 and Cys-167 are oxidised to a cystine. Chloride is bound at residue Arg-202. Asp-204 (nucleophile) is an active-site residue. His-208 is a Ca(2+) binding site. Glu-241 (proton donor) is an active-site residue. Chloride-binding residues include Asn-304 and Arg-343. The disordered stretch occupies residues 350–370 (FTDTDQGPPTTDGQNIASPSF). Low complexity predominate over residues 351 to 363 (TDTDQGPPTTDGQ). 2 disulfides stabilise this stretch: Cys-376-Cys-382 and Cys-448-Cys-460.

It belongs to the glycosyl hydrolase 13 family. In terms of assembly, monomer. It depends on Ca(2+) as a cofactor. Requires chloride as cofactor.

It catalyses the reaction Endohydrolysis of (1-&gt;4)-alpha-D-glucosidic linkages in polysaccharides containing three or more (1-&gt;4)-alpha-linked D-glucose units.. This is Alpha-amylase 2 (Amy58) from Drosophila ananassae (Fruit fly).